A 244-amino-acid chain; its full sequence is Lipoprotein-releasing system ATP-binding protein LolD (244 aa).

An ABC transporter domain is found at 19–244 (IRAEALAKTY…KLRELAPSAV (226 aa)). 55 to 62 (GASGAGKS) provides a ligand contact to ATP.

The protein belongs to the ABC transporter superfamily. Lipoprotein translocase (TC 3.A.1.125) family. The complex is composed of two ATP-binding proteins (LolD) and two transmembrane proteins (LolC and LolE).

It is found in the cell inner membrane. In terms of biological role, part of the ABC transporter complex LolCDE involved in the translocation of mature outer membrane-directed lipoproteins, from the inner membrane to the periplasmic chaperone, LolA. Responsible for the formation of the LolA-lipoprotein complex in an ATP-dependent manner. The chain is Lipoprotein-releasing system ATP-binding protein LolD from Xanthomonas euvesicatoria pv. vesicatoria (strain 85-10) (Xanthomonas campestris pv. vesicatoria).